Reading from the N-terminus, the 159-residue chain is Transmembrane protein 89 (159 aa).

A signal peptide spans M1–S24. The Extracellular portion of the chain corresponds to R25–A63. A helical transmembrane segment spans residues S64–L86. Residues Q87–G159 lie on the Cytoplasmic side of the membrane. Residues R91–W110 are disordered.

The protein resides in the membrane. The polypeptide is Transmembrane protein 89 (TMEM89) (Homo sapiens (Human)).